The chain runs to 174 residues: Crossover junction endodeoxyribonuclease RuvC (174 aa).

Catalysis depends on residues Asp8, Glu67, and Asp139. Residues Asp8, Glu67, and Asp139 each contribute to the Mg(2+) site.

It belongs to the RuvC family. As to quaternary structure, homodimer which binds Holliday junction (HJ) DNA. The HJ becomes 2-fold symmetrical on binding to RuvC with unstacked arms; it has a different conformation from HJ DNA in complex with RuvA. In the full resolvosome a probable DNA-RuvA(4)-RuvB(12)-RuvC(2) complex forms which resolves the HJ. Requires Mg(2+) as cofactor.

The protein localises to the cytoplasm. It carries out the reaction Endonucleolytic cleavage at a junction such as a reciprocal single-stranded crossover between two homologous DNA duplexes (Holliday junction).. In terms of biological role, the RuvA-RuvB-RuvC complex processes Holliday junction (HJ) DNA during genetic recombination and DNA repair. Endonuclease that resolves HJ intermediates. Cleaves cruciform DNA by making single-stranded nicks across the HJ at symmetrical positions within the homologous arms, yielding a 5'-phosphate and a 3'-hydroxyl group; requires a central core of homology in the junction. The consensus cleavage sequence is 5'-(A/T)TT(C/G)-3'. Cleavage occurs on the 3'-side of the TT dinucleotide at the point of strand exchange. HJ branch migration catalyzed by RuvA-RuvB allows RuvC to scan DNA until it finds its consensus sequence, where it cleaves and resolves the cruciform DNA. The sequence is that of Crossover junction endodeoxyribonuclease RuvC from Pseudoalteromonas translucida (strain TAC 125).